Reading from the N-terminus, the 389-residue chain is Tyrosinase-like protein phomQ1 (389 aa).

A helical membrane pass occupies residues 53-73 (TIIVVSVITFAAIIGCWVFLS). Cu cation-binding residues include His141 and His150. N-linked (GlcNAc...) asparagine glycosylation occurs at Asn220. Residues His290 and His316 each coordinate Cu cation.

The protein belongs to the tyrosinase family. It depends on Cu(2+) as a cofactor.

Its subcellular location is the membrane. The protein operates within mycotoxin biosynthesis. Tyrosinase-like protein; part of the gene cluster that mediates the biosynthesis of the phomopsins, a group of hexapeptide mycotoxins which infects lupins and causes lupinosis disease in livestock. Within the pathway, phomQ1 functions as a halogenase, converting. The pathway starts with the processing of the precursor phomA by several endopeptidases including kexin proteases as well as the cluster-specific S41 family peptidase phomP1 and the oligopeptidase phomG to produce 10 identical copies of the hexapeptide Tyr-Val-Ile-Pro-Ile-Asp. After being excised from the precursor peptide, the core peptides are cyclized and modified post-translationally by enzymes encoded within the gene cluster. The timing and order of proteolysis of the phomA precursor and PTMs are still unknown. Two tyrosinase-like enzymes, phomQ1 and phomQ2, catalyze the chlorination and hydroxylation of Tyr, respectively. PhomYb, is proposed to be involved in the construction of the macrocyclic structure. The other 4 ustYa family proteins may be involved in PTMs that generate the unique structure of phomopsin A. PhomYa is required for the hydroxylation of C-beta of Tyr. PhomYc, phomYd, and phomYe are responsible for the biosynthesis of 2,3-dehydroisoleucine (dIle), 2,3-dehydroaspartic acid (dAsp), and 3,4-dehydroproline (dPro), respectively. While dIle formation by phomYc is indispensable for the installation of dAsp by phomYd, the order of the other PTMs have not been elucidated yet. Most of the biosynthetic enzymes likely have broad substrate specificity, and thus, there might be a metabolic grid from a precursor to phomopsin A. The enzyme(s) responsible for the biosynthesis of 3,4-dehydrovaline (dVal) have also not been identified yet. Finally, phomM acts as an S-adenosylmethionine-dependent alpha-N-methyltransferase that catalyzes two successive N-methylation reactions, converting N-desmethyl-phomopsin A to phomopsin A and phomopsin A further to an N,N-dimethylated congener called phomopsin E. This is Tyrosinase-like protein phomQ1 from Diaporthe leptostromiformis (Lupinosis disease fungus).